We begin with the raw amino-acid sequence, 353 residues long: MSEPIKPRIDFEQPLEPPQEPVLRANVAFDEQQAEHFFPAAPELQQEEEEGRAEGIINAALKPKRSLWRKMVTAGLTLFGVSVVAQGVQWVHTAWVQQDWIAMGGGVAGGLIVFAGVGSVVTEWRRLYRLRQRAEERDVARELLHSHGLGKGREFCEKLARQAGLDQGHPALQRWQASLHETQNDREVVALYAKLVQPVLDNQARREISRSAAESTLMIAVSPLAVVDMAFIAWRNIRLINRIAALYGIELGYFSRLRLFRLVLLNIAFAGASELVREVGMDWMSQDLAARLSARAAQGIGAGLLTARLGIKAMELCRPLPWLEGEKPKLGDFRSQLIGQLKDTMKKSDNKAK.

A run of 3 helical transmembrane segments spans residues 71–91 (MVTAGLTLFGVSVVAQGVQWV), 101–121 (IAMGGGVAGGLIVFAGVGSVV), and 214–234 (ESTLMIAVSPLAVVDMAFIAW).

Belongs to the UPF0283 family.

It is found in the cell inner membrane. The protein is UPF0283 membrane protein Spro_2618 of Serratia proteamaculans (strain 568).